We begin with the raw amino-acid sequence, 309 residues long: Foldase protein PrsA (309 aa).

An N-terminal signal peptide occupies residues 1 to 22 (MKTRSKLAAGFLTLMSVATLAA). Cys23 carries the N-palmitoyl cysteine lipid modification. Cys23 carries the S-diacylglycerol cysteine lipid modification. Residues 146 to 241 (TPETSVQVIK…TSYYIIKVTD (96 aa)) form the PpiC domain.

This sequence belongs to the PrsA family.

The protein localises to the cell membrane. The enzyme catalyses [protein]-peptidylproline (omega=180) = [protein]-peptidylproline (omega=0). Plays a major role in protein secretion by helping the post-translocational extracellular folding of several secreted proteins. This is Foldase protein PrsA from Streptococcus agalactiae serotype V (strain ATCC BAA-611 / 2603 V/R).